Here is a 2069-residue protein sequence, read N- to C-terminus: Dedicator of cytokinesis protein 9 (2069 aa).

4 positions are modified to phosphoserine: serine 21, serine 32, serine 167, and serine 170. The 108-residue stretch at 174 to 281 (GITKHGWLYK…WITILNKILQ (108 aa)) folds into the PH domain. A disordered region spans residues 290–313 (EKRNGDSHEDDEQSKLEGSGSGLD). 2 positions are modified to phosphoserine: serine 433 and serine 443. The 179-residue stretch at 640-818 (TNHLYVYPKY…PLLKISTHLV (179 aa)) folds into the C2 DOCK-type domain. Phosphoserine is present on residues serine 927 and serine 1235. Phosphothreonine is present on threonine 1241. A disordered region spans residues 1241–1282 (TPNINSVRNADSRGSLISTDSGNSLPERNSEKSNSLDKHQQS). Residues serine 1255, serine 1261, and serine 1264 each carry the phosphoserine modification. Over residues 1255–1267 (SLISTDSGNSLPE) the composition is skewed to polar residues. Basic and acidic residues predominate over residues 1268–1280 (RNSEKSNSLDKHQ). Positions 1605 to 2069 (KSYASTPELR…LSEIMHEQLG (465 aa)) constitute a DOCKER domain. Positions 1693–2069 (DEEASMMEDV…LSEIMHEQLG (377 aa)) are interaction with CDC42. Coiled coils occupy residues 1948-1982 (IEVA…KLQG) and 2034-2067 (NERL…MHEQ).

Belongs to the DOCK family. As to quaternary structure, homodimer. Interacts preferentially with nucleotide-depleted CDC42. As to expression, widely expressed, with highest expression in heart and placenta. Expressed at intermediate level in kidney, brain, lung and skeletal muscle.

It is found in the endomembrane system. Its function is as follows. Guanine nucleotide-exchange factor (GEF) that activates CDC42 by exchanging bound GDP for free GTP. Overexpression induces filopodia formation. In Homo sapiens (Human), this protein is Dedicator of cytokinesis protein 9.